Here is an 89-residue protein sequence, read N- to C-terminus: MSVEEQFKTSAEQVKKLKSSPSDTELLELYSLYKQATIGDVNTDRPGMLYLKEKAKWDAWNGRKGLGKEQAQELYVKKVKELVEKNGLA.

One can recognise an ACB domain in the interval 3–88; it reads VEEQFKTSAE…VKELVEKNGL (86 aa). An acyl-CoA contacts are provided by residues lysine 15, 30–34, lysine 52, lysine 56, and tyrosine 75; that span reads YSLYK.

It belongs to the ACBP family.

Functionally, binds medium- and long-chain acyl-CoA esters with very high affinity and may function as an intracellular carrier of acyl-CoA esters. This Hypsibius exemplaris (Freshwater tardigrade) protein is Putative acyl-CoA-binding protein.